The primary structure comprises 502 residues: Tryptophan decarboxylase TDC1 (502 aa).

Positions 1–18 are enriched in polar residues; the sequence is MGSLDSNYDTESPASVGQ. The disordered stretch occupies residues 1-21; sequence MGSLDSNYDTESPASVGQFNP. Residue Lys319 is modified to N6-(pyridoxal phosphate)lysine.

It belongs to the group II decarboxylase family. It depends on pyridoxal 5'-phosphate as a cofactor. In terms of tissue distribution, highly expressed in apex. Expressed in young stem and bark tissues. Expressed at low levels in leaves, fruits and seeds.

The catalysed reaction is L-tryptophan + H(+) = tryptamine + CO2. In terms of biological role, involved in the biosynthesis of tryptamine. Supplies tryptamine for the indole moiety of camptothecin (CPT), an anti-cancer monoterpene alkaloid. Represents a key step in monoterpene indole alkaloid biosynthesis. Is specific for tryptophan, and inactive against tyrosine, phenylalanine and 3,4-dihydroxyphenylalanine (dopa). In Camptotheca acuminata (Happy tree), this protein is Tryptophan decarboxylase TDC1.